The sequence spans 1214 residues: [F-actin]-monooxygenase mical1 (1214 aa).

A monooxygenase domain region spans residues Met-1 to Glu-488. Residues Cys-96, Glu-115 to Arg-117, Arg-122 to Asn-124, Phe-182, Tyr-292, and Asp-392 each bind FAD. Residues Ala-484–Lys-505 are disordered. In terms of domain architecture, Calponin-homology (CH) spans Met-508 to Thr-614. The interval His-649–Glu-676 is disordered. Positions Asn-663 to Glu-676 are enriched in basic and acidic residues. The LIM zinc-binding domain occupies Glu-686–Glu-748. Zn(2+)-binding residues include Cys-688, Cys-691, His-709, Cys-712, Cys-715, Cys-718, Cys-738, and His-741. The tract at residues Glu-747–Leu-1019 is disordered. Acidic residues predominate over residues Pro-796–Leu-815. Polar residues predominate over residues Ser-828–Ile-841. Over residues Arg-910–Ser-922 the composition is skewed to low complexity. Positions Ser-974–Phe-987 are enriched in polar residues. A compositionally biased stretch (acidic residues) spans Val-1003 to Leu-1019. In terms of domain architecture, bMERB spans Lys-1053 to Leu-1199. Residues His-1061–Glu-1131 adopt a coiled-coil conformation. The interval Gln-1194–Glu-1214 is disordered.

Belongs to the Mical family. FAD is required as a cofactor.

It localises to the cytoplasm. Its subcellular location is the cytoskeleton. The protein resides in the midbody. The protein localises to the endosome membrane. The enzyme catalyses L-methionyl-[F-actin] + NADPH + O2 + H(+) = L-methionyl-(R)-S-oxide-[F-actin] + NADP(+) + H2O. It carries out the reaction NADPH + O2 + H(+) = H2O2 + NADP(+). In terms of biological role, monooxygenase that promotes depolymerization of F-actin by mediating oxidation of specific methionine residues on actin to form methionine-sulfoxide, resulting in actin filament disassembly and prevent repolymerization. May be involved in endosomal tubule extension and neosynthesized protein export. The sequence is that of [F-actin]-monooxygenase mical1 (mical1) from Danio rerio (Zebrafish).